Here is a 235-residue protein sequence, read N- to C-terminus: Phosphoribosylformylglycinamidine synthase subunit PurQ (235 aa).

A Glutamine amidotransferase type-1 domain is found at 3 to 234; sequence FGVLVFPGSN…LNSLMAQGVT (232 aa). Cys86 (nucleophile) is an active-site residue. Active-site residues include His203 and Glu205.

Part of the FGAM synthase complex composed of 1 PurL, 1 PurQ and 2 PurS subunits.

The protein resides in the cytoplasm. The catalysed reaction is N(2)-formyl-N(1)-(5-phospho-beta-D-ribosyl)glycinamide + L-glutamine + ATP + H2O = 2-formamido-N(1)-(5-O-phospho-beta-D-ribosyl)acetamidine + L-glutamate + ADP + phosphate + H(+). The enzyme catalyses L-glutamine + H2O = L-glutamate + NH4(+). The protein operates within purine metabolism; IMP biosynthesis via de novo pathway; 5-amino-1-(5-phospho-D-ribosyl)imidazole from N(2)-formyl-N(1)-(5-phospho-D-ribosyl)glycinamide: step 1/2. Its function is as follows. Part of the phosphoribosylformylglycinamidine synthase complex involved in the purines biosynthetic pathway. Catalyzes the ATP-dependent conversion of formylglycinamide ribonucleotide (FGAR) and glutamine to yield formylglycinamidine ribonucleotide (FGAM) and glutamate. The FGAM synthase complex is composed of three subunits. PurQ produces an ammonia molecule by converting glutamine to glutamate. PurL transfers the ammonia molecule to FGAR to form FGAM in an ATP-dependent manner. PurS interacts with PurQ and PurL and is thought to assist in the transfer of the ammonia molecule from PurQ to PurL. This chain is Phosphoribosylformylglycinamidine synthase subunit PurQ, found in Acaryochloris marina (strain MBIC 11017).